A 347-amino-acid polypeptide reads, in one-letter code: Single-pass membrane and coiled-coil domain-containing protein 2 (347 aa).

The disordered stretch occupies residues 1 to 89 (MMSLQLGTAG…PPSKPDEQEV (89 aa)). 3 stretches are compositionally biased toward basic and acidic residues: residues 10–21 (GKERQLAEKSRD), 36–51 (EMDH…DKPS), and 60–86 (YKMD…KPDE). Positions 139 to 238 (DWLERINNII…MNVLNSKLEM (100 aa)) form a coiled coil. A Phosphoserine modification is found at Ser178. Residues 243–274 (GSDADSHNSEDVDTEQEEPLVPEASPSLSASP) are disordered. The segment covering 253–262 (DVDTEQEEPL) has biased composition (acidic residues). Over residues 263–273 (VPEASPSLSAS) the composition is skewed to low complexity. The helical transmembrane segment at 288 to 308 (LFVIVYVVTITGLSCYILFVD) threads the bilayer.

The protein localises to the membrane. This is Single-pass membrane and coiled-coil domain-containing protein 2 (Smco2) from Mus musculus (Mouse).